Here is a 674-residue protein sequence, read N- to C-terminus: Endopolyphosphatase (674 aa).

Residues M1–S21 are Cytoplasmic-facing. 2 propeptides (removed in mature form) span residues M1–K83 and E385–D674. K6 is covalently cross-linked (Glycyl lysine isopeptide (Lys-Gly) (interchain with G-Cter in ubiquitin)). The chain crosses the membrane as a helical; Signal-anchor for type II membrane protein span at residues L22–F42. At Q43–D674 the chain is on the vacuolar side. The N-linked (GlcNAc...) asparagine glycan is linked to N58. The interval M384–T403 is disordered. 2 N-linked (GlcNAc...) asparagine glycosylation sites follow: N505 and N511.

It belongs to the endopolyphosphatase PPN1 family. In terms of assembly, homotetramer. Interacts with PPN2. Mn(2+) serves as cofactor. The cofactor is Mg(2+). Requires Co(2+) as cofactor. It depends on Zn(2+) as a cofactor. Processing by proteases in the vacuole is required for activation. Post-translationally, ubiquitinated. Ubiquitination mediates sorting into internal vesicles in late endosomes. TUL1 and RSP5 are required for ubiquitination. Other cytoplasmic Lys residues than Lys-6 may also be ubiquitinated. In terms of processing, N-glycosylated. N-glycosylation is essential for the protease-mediated maturation.

The protein resides in the vacuole membrane. The protein localises to the cytoplasm. It carries out the reaction [phosphate](n+1) + n H2O = (n+1) phosphate + n H(+). It catalyses the reaction [phosphate](n) + H2O = [phosphate](n-1) + phosphate + H(+). The catalysed reaction is dATP + H2O = dADP + phosphate + H(+). Its activity is regulated as follows. Inhibited by heparin and EDTA. In terms of biological role, catalyzes the hydrolysis of inorganic polyphosphate (polyP) chains of many hundreds of phosphate residues into shorter lengths. Has both exopolyphosphatase and endopolyphosphatase activities at different ratios depending on divalent cations by cleaving phosphate from the chain end and by fragmenting long-chain polymers into shorter ones, respectively. The limited digestion products are 1 and 3 P(i) residues. Also releases phosphate from dATP. dATP phosphohydrolase activity is about 7-fold lower than the exopolyphosphatase activity. In Saccharomyces cerevisiae (strain ATCC 204508 / S288c) (Baker's yeast), this protein is Endopolyphosphatase.